A 474-amino-acid chain; its full sequence is MTKKLHIKTWGCQMNEYDSSKMADLLASTHGYQLTTIPEEADLLLLNTCSIREKAQEKVFSLLGQWKLLKEKNPQLIIGVGGCVASQEGEQLRQRAPCVDVIFGPQTLHRLPEMINHVQGTNSPVVDISFPEIEKFDRLPEPRAEGPTAFVSIMEGCNKYCTFCVVPYTRGEEVSRPSDDILFEIAQLAAQGVREVNLLGQNVNAYRGATYDGDICSFAELLRLVAAIDGIDRIRFTTSHPIEFTDDIIDVYRDTPELVSFLHLPVQSGSDRILTMMKRAHTALEYKAIIRKLRQARPDIQISSDFIVGFPGETQQDFEQTMKLVADIHFDTSYSFIYSPRPGTPAADLPDNVSEEEKKQRLHILQQRISQQAMEISRKMVGTVQRVLVEGTSRKNVMELAGRTENNRVVNFEGSPDMIGKFVDVEIVNVYASSLRGILLRTEDQMDLRTHESPQSVIARTRKENEIGVGIYQP.

The 118-residue stretch at 3 to 120 (KKLHIKTWGC…LPEMINHVQG (118 aa)) folds into the MTTase N-terminal domain. The [4Fe-4S] cluster site is built by cysteine 12, cysteine 49, cysteine 83, cysteine 157, cysteine 161, and cysteine 164. A Radical SAM core domain is found at 143-375 (RAEGPTAFVS…QQRISQQAME (233 aa)). The TRAM domain maps to 378–441 (RKMVGTVQRV…ASSLRGILLR (64 aa)).

It belongs to the methylthiotransferase family. MiaB subfamily. Monomer. The cofactor is [4Fe-4S] cluster.

The protein resides in the cytoplasm. The enzyme catalyses N(6)-dimethylallyladenosine(37) in tRNA + (sulfur carrier)-SH + AH2 + 2 S-adenosyl-L-methionine = 2-methylsulfanyl-N(6)-dimethylallyladenosine(37) in tRNA + (sulfur carrier)-H + 5'-deoxyadenosine + L-methionine + A + S-adenosyl-L-homocysteine + 2 H(+). Functionally, catalyzes the methylthiolation of N6-(dimethylallyl)adenosine (i(6)A), leading to the formation of 2-methylthio-N6-(dimethylallyl)adenosine (ms(2)i(6)A) at position 37 in tRNAs that read codons beginning with uridine. The chain is tRNA-2-methylthio-N(6)-dimethylallyladenosine synthase from Yersinia pseudotuberculosis serotype O:1b (strain IP 31758).